The sequence spans 201 residues: Regulator of G-protein signaling 1 (201 aa).

In terms of domain architecture, RGS spans 75–191 (SLEKLLISED…LKSEIFLRLA (117 aa)).

It localises to the cell membrane. The protein resides in the cytoplasm. Its subcellular location is the cytosol. Its function is as follows. Regulates G protein-coupled receptor signaling cascades, including signaling downstream of the N-formylpeptide chemoattractant receptors and leukotriene receptors. Inhibits B cell chemotaxis. Inhibits signal transduction by increasing the GTPase activity of G protein alpha subunits, thereby driving them into their inactive GDP-bound form. The chain is Regulator of G-protein signaling 1 (rgs1) from Xenopus tropicalis (Western clawed frog).